The chain runs to 76 residues: MKLTCVLIVAVLILAACQFTAANMARYGKTQIARSDVKSIDARRPKCCCVCGVVGRKCCSTWKDCHPVHLPCPSSG.

A signal peptide spans 1–43 (MKLTCVLIVAVLILAACQFTAANMARYGKTQIARSDVKSIDAR).

The protein belongs to the conotoxin O1 superfamily. In terms of processing, may contain 4 disulfide bonds. Expressed by the venom duct.

It is found in the secreted. Is able to inhibit the growth of Mycobacterium tuberculosis (MIC=0.22-3.52 uM against strain H37Rv and 2 multidrug-resistant strains). May also show neurotoxic activity. The protein is Conotoxin Cal29b of Californiconus californicus (California cone).